Reading from the N-terminus, the 226-residue chain is Phosphoribosylformylglycinamidine synthase subunit PurQ (226 aa).

One can recognise a Glutamine amidotransferase type-1 domain in the interval 2–226 (KIAVIVFPGS…LENGTVIAEG (225 aa)). Cysteine 86 (nucleophile) is an active-site residue. Catalysis depends on residues histidine 195 and glutamate 197.

Part of the FGAM synthase complex composed of 1 PurL, 1 PurQ and 2 PurS subunits.

The protein resides in the cytoplasm. The catalysed reaction is N(2)-formyl-N(1)-(5-phospho-beta-D-ribosyl)glycinamide + L-glutamine + ATP + H2O = 2-formamido-N(1)-(5-O-phospho-beta-D-ribosyl)acetamidine + L-glutamate + ADP + phosphate + H(+). It catalyses the reaction L-glutamine + H2O = L-glutamate + NH4(+). The protein operates within purine metabolism; IMP biosynthesis via de novo pathway; 5-amino-1-(5-phospho-D-ribosyl)imidazole from N(2)-formyl-N(1)-(5-phospho-D-ribosyl)glycinamide: step 1/2. In terms of biological role, part of the phosphoribosylformylglycinamidine synthase complex involved in the purines biosynthetic pathway. Catalyzes the ATP-dependent conversion of formylglycinamide ribonucleotide (FGAR) and glutamine to yield formylglycinamidine ribonucleotide (FGAM) and glutamate. The FGAM synthase complex is composed of three subunits. PurQ produces an ammonia molecule by converting glutamine to glutamate. PurL transfers the ammonia molecule to FGAR to form FGAM in an ATP-dependent manner. PurS interacts with PurQ and PurL and is thought to assist in the transfer of the ammonia molecule from PurQ to PurL. The polypeptide is Phosphoribosylformylglycinamidine synthase subunit PurQ (Limosilactobacillus fermentum (strain NBRC 3956 / LMG 18251) (Lactobacillus fermentum)).